Here is a 246-residue protein sequence, read N- to C-terminus: Probable 2-phosphosulfolactate phosphatase (246 aa).

The protein belongs to the ComB family. Mg(2+) is required as a cofactor.

The catalysed reaction is (2R)-O-phospho-3-sulfolactate + H2O = (2R)-3-sulfolactate + phosphate. This Synechococcus sp. (strain WH7803) protein is Probable 2-phosphosulfolactate phosphatase.